The following is a 359-amino-acid chain: Queuine tRNA-ribosyltransferase (359 aa).

Catalysis depends on Asp92, which acts as the Proton acceptor. Substrate-binding positions include 92-96, Asp146, Gln189, and Gly216; that span reads DSGGF. Positions 245–251 are RNA binding; it reads GVGKPAD. Asp264 acts as the Nucleophile in catalysis. An RNA binding; important for wobble base 34 recognition region spans residues 269-273; the sequence is TRSGR. Cys302, Cys304, Cys307, and His333 together coordinate Zn(2+).

This sequence belongs to the queuine tRNA-ribosyltransferase family. Homodimer. Within each dimer, one monomer is responsible for RNA recognition and catalysis, while the other monomer binds to the replacement base PreQ1. Requires Zn(2+) as cofactor.

The catalysed reaction is 7-aminomethyl-7-carbaguanine + guanosine(34) in tRNA = 7-aminomethyl-7-carbaguanosine(34) in tRNA + guanine. It participates in tRNA modification; tRNA-queuosine biosynthesis. Catalyzes the base-exchange of a guanine (G) residue with the queuine precursor 7-aminomethyl-7-deazaguanine (PreQ1) at position 34 (anticodon wobble position) in tRNAs with GU(N) anticodons (tRNA-Asp, -Asn, -His and -Tyr). Catalysis occurs through a double-displacement mechanism. The nucleophile active site attacks the C1' of nucleotide 34 to detach the guanine base from the RNA, forming a covalent enzyme-RNA intermediate. The proton acceptor active site deprotonates the incoming PreQ1, allowing a nucleophilic attack on the C1' of the ribose to form the product. After dissociation, two additional enzymatic reactions on the tRNA convert PreQ1 to queuine (Q), resulting in the hypermodified nucleoside queuosine (7-(((4,5-cis-dihydroxy-2-cyclopenten-1-yl)amino)methyl)-7-deazaguanosine). This Rickettsia bellii (strain RML369-C) protein is Queuine tRNA-ribosyltransferase.